The chain runs to 402 residues: Zinc finger CCHC domain-containing protein 12 (402 aa).

Residues 308-341 form a disordered region; it reads IDSPHNSRAQFPSTSGGSGYKNNGPGEMRRARKR. A compositionally biased stretch (polar residues) spans 311–322; that stretch reads PHNSRAQFPSTS. The CCHC-type zinc-finger motif lies at 345–362; it reads IRCSYCGEEGHSKETCDN.

The protein belongs to the ZCCHC12 family. In terms of assembly, interacts with SMAD1 and CREB-binding protein (CBP). Forms a protein-DNA complex through its association with SMAD1.

Transcriptional coactivator in the bone morphogenetic protein (BMP)-signaling pathway. It positively modulates BMP signaling by interacting with SMAD1 and associating with CBP in the transcription complex. It contributes to the BMP-induced enhancement of cholinergic-neuron-specific gene expression. This chain is Zinc finger CCHC domain-containing protein 12 (ZCCHC12), found in Homo sapiens (Human).